A 97-amino-acid polypeptide reads, in one-letter code: DNA-directed RNA polymerase subunit omega (97 aa).

Belongs to the RNA polymerase subunit omega family. The RNAP catalytic core consists of 2 alpha, 1 beta, 1 beta' and 1 omega subunit. When a sigma factor is associated with the core the holoenzyme is formed, which can initiate transcription.

The catalysed reaction is RNA(n) + a ribonucleoside 5'-triphosphate = RNA(n+1) + diphosphate. Functionally, promotes RNA polymerase assembly. Latches the N- and C-terminal regions of the beta' subunit thereby facilitating its interaction with the beta and alpha subunits. The chain is DNA-directed RNA polymerase subunit omega from Coxiella burnetii (strain CbuK_Q154) (Coxiella burnetii (strain Q154)).